Consider the following 206-residue polypeptide: 2,3-bisphosphoglycerate-dependent phosphoglycerate mutase (206 aa).

Residues 9 to 16 (RHGQSEWN), 22 to 23 (TG), Arg-61, 88 to 91 (ERDY), Lys-99, 115 to 116 (RR), and 159 to 160 (GN) each bind substrate. Catalysis depends on His-10, which acts as the Tele-phosphohistidine intermediate. Glu-88 functions as the Proton donor/acceptor in the catalytic mechanism.

Belongs to the phosphoglycerate mutase family. BPG-dependent PGAM subfamily. As to quaternary structure, homodimer.

It carries out the reaction (2R)-2-phosphoglycerate = (2R)-3-phosphoglycerate. It functions in the pathway carbohydrate degradation; glycolysis; pyruvate from D-glyceraldehyde 3-phosphate: step 3/5. Catalyzes the interconversion of 2-phosphoglycerate and 3-phosphoglycerate. The polypeptide is 2,3-bisphosphoglycerate-dependent phosphoglycerate mutase (Brucella melitensis biotype 2 (strain ATCC 23457)).